We begin with the raw amino-acid sequence, 86 residues long: Insulin (86 aa).

3 cysteine pairs are disulfide-bonded: Cys-7/Cys-72, Cys-19/Cys-85, and Cys-71/Cys-76. The propeptide at 33 to 63 is c peptide; the sequence is EAEDPQVGEVELGGGPGLGGLQPLALAGPQQ.

Belongs to the insulin family. Heterodimer of a B chain and an A chain linked by two disulfide bonds.

The protein resides in the secreted. Functionally, insulin decreases blood glucose concentration. It increases cell permeability to monosaccharides, amino acids and fatty acids. It accelerates glycolysis, the pentose phosphate cycle, and glycogen synthesis in liver. In Equus caballus (Horse), this protein is Insulin (INS).